The sequence spans 540 residues: Chaperonin GroEL (540 aa).

ATP contacts are provided by residues threonine 29–proline 32, aspartate 86–threonine 90, glycine 413, asparagine 476–alanine 478, and aspartate 492.

This sequence belongs to the chaperonin (HSP60) family. In terms of assembly, forms a cylinder of 14 subunits composed of two heptameric rings stacked back-to-back. Interacts with the co-chaperonin GroES.

It is found in the cytoplasm. The catalysed reaction is ATP + H2O + a folded polypeptide = ADP + phosphate + an unfolded polypeptide.. Its function is as follows. Together with its co-chaperonin GroES, plays an essential role in assisting protein folding. The GroEL-GroES system forms a nano-cage that allows encapsulation of the non-native substrate proteins and provides a physical environment optimized to promote and accelerate protein folding. This is Chaperonin GroEL from Staphylococcus carnosus (strain TM300).